The chain runs to 359 residues: Carbamoyl phosphate synthase arginine-specific small chain (359 aa).

The CPSase stretch occupies residues 1 to 168 (MKAYLVLATG…VETFEGNGPH (168 aa)). L-glutamine-binding residues include serine 45, glycine 216, and glycine 218. The Glutamine amidotransferase type-1 domain occupies 168–355 (HIVLIDYGFK…IDDVAAKGRE (188 aa)). Cysteine 243 functions as the Nucleophile in the catalytic mechanism. 4 residues coordinate L-glutamine: leucine 244, glutamine 247, asparagine 285, and tyrosine 288. Catalysis depends on residues histidine 328 and glutamate 330.

It belongs to the CarA family. As to quaternary structure, composed of two chains; the small (or glutamine) chain promotes the hydrolysis of glutamine to ammonia, which is used by the large (or ammonia) chain to synthesize carbamoyl phosphate. Tetramer of heterodimers (alpha,beta)4.

It catalyses the reaction hydrogencarbonate + L-glutamine + 2 ATP + H2O = carbamoyl phosphate + L-glutamate + 2 ADP + phosphate + 2 H(+). The enzyme catalyses L-glutamine + H2O = L-glutamate + NH4(+). It participates in amino-acid biosynthesis; L-arginine biosynthesis; carbamoyl phosphate from bicarbonate: step 1/1. In terms of biological role, small subunit of the glutamine-dependent carbamoyl phosphate synthetase (CPSase). CPSase catalyzes the formation of carbamoyl phosphate from the ammonia moiety of glutamine, carbonate, and phosphate donated by ATP, constituting the first step of the biosynthetic pathway leading to arginine and/or urea. The small subunit (glutamine amidotransferase) binds and cleaves glutamine to supply the large subunit with the substrate ammonia. The protein is Carbamoyl phosphate synthase arginine-specific small chain of Halalkalibacterium halodurans (strain ATCC BAA-125 / DSM 18197 / FERM 7344 / JCM 9153 / C-125) (Bacillus halodurans).